A 319-amino-acid polypeptide reads, in one-letter code: Tetrahydromethanopterin S-methyltransferase subunit H (319 aa).

This sequence belongs to the MtrH family. As to quaternary structure, the complex is composed of 8 subunits; MtrA, MtrB, MtrC, MtrD, MtrE, MtrF, MtrG and MtrH.

It carries out the reaction 5-methyl-5,6,7,8-tetrahydromethanopterin + coenzyme M + 2 Na(+)(in) = 5,6,7,8-tetrahydromethanopterin + methyl-coenzyme M + 2 Na(+)(out). It functions in the pathway one-carbon metabolism; methanogenesis from CO(2); methyl-coenzyme M from 5,10-methylene-5,6,7,8-tetrahydromethanopterin: step 2/2. Functionally, part of a complex that catalyzes the formation of methyl-coenzyme M and tetrahydromethanopterin from coenzyme M and methyl-tetrahydromethanopterin. This is an energy-conserving, sodium-ion translocating step. MtrH catalyzes the transfer of the methyl group from methyl-tetrahydromethanopterin to the corrinoid prosthetic group of MtrA. This chain is Tetrahydromethanopterin S-methyltransferase subunit H, found in Methanococcus vannielii (strain ATCC 35089 / DSM 1224 / JCM 13029 / OCM 148 / SB).